We begin with the raw amino-acid sequence, 554 residues long: Eukaryotic translation initiation factor 3 subunit D-2 (554 aa).

A disordered region spans residues 116-149 (RGNAAIGGGQGGAGGTGGAGVGNKYGKGRDMRRG). Positions 120-140 (AIGGGQGGAGGTGGAGVGNKY) are enriched in gly residues. The interval 291-305 (QFDLLTVNETALEPP) is RNA gate. The interval 532–554 (FDSDGNDDEETSDDRPFLKSLGN) is disordered.

The protein belongs to the eIF-3 subunit D family. As to quaternary structure, component of the eukaryotic translation initiation factor 3 (eIF-3) complex. The eIF-3 complex interacts with pix.

The protein resides in the cytoplasm. In terms of biological role, mRNA cap-binding component of the eukaryotic translation initiation factor 3 (eIF-3) complex, which is involved in protein synthesis of a specialized repertoire of mRNAs and, together with other initiation factors, stimulates binding of mRNA and methionyl-tRNAi to the 40S ribosome. The eIF-3 complex specifically targets and initiates translation of a subset of mRNAs involved in cell proliferation. In the eIF-3 complex, eif3d specifically recognizes and binds the 7-methylguanosine cap of a subset of mRNAs. The polypeptide is Eukaryotic translation initiation factor 3 subunit D-2 (Drosophila virilis (Fruit fly)).